A 124-amino-acid polypeptide reads, in one-letter code: Small ribosomal subunit protein uS11 (124 aa).

It belongs to the universal ribosomal protein uS11 family. In terms of assembly, part of the 30S ribosomal subunit. Interacts with proteins S7 and S18. Binds to IF-3.

In terms of biological role, located on the platform of the 30S subunit, it bridges several disparate RNA helices of the 16S rRNA. Forms part of the Shine-Dalgarno cleft in the 70S ribosome. In Sulfurovum sp. (strain NBC37-1), this protein is Small ribosomal subunit protein uS11.